We begin with the raw amino-acid sequence, 483 residues long: Alginate biosynthesis protein AlgA (483 aa).

It belongs to the mannose-6-phosphate isomerase type 2 family. Monomer. It depends on Co(2+) as a cofactor.

The catalysed reaction is D-mannose 6-phosphate = D-fructose 6-phosphate. It catalyses the reaction alpha-D-mannose 1-phosphate + GTP + H(+) = GDP-alpha-D-mannose + diphosphate. The protein operates within nucleotide-sugar biosynthesis; GDP-alpha-D-mannose biosynthesis; GDP-alpha-D-mannose from alpha-D-mannose 1-phosphate (GTP route): step 1/1. Its pathway is nucleotide-sugar biosynthesis; GDP-alpha-D-mannose biosynthesis; alpha-D-mannose 1-phosphate from D-fructose 6-phosphate: step 1/2. Its function is as follows. Produces a precursor for alginate polymerization. The alginate layer provides a protective barrier against host immune defenses and antibiotics. This chain is Alginate biosynthesis protein AlgA (algA), found in Pseudomonas syringae pv. tomato (strain ATCC BAA-871 / DC3000).